The chain runs to 127 residues: Glycine cleavage system H protein 2 (127 aa).

In terms of domain architecture, Lipoyl-binding spans 24-105 (SVTVGISDHA…PYGSWIFKLK (82 aa)). K65 is subject to N6-lipoyllysine.

The protein belongs to the GcvH family. The glycine cleavage system is composed of four proteins: P, T, L and H. Requires (R)-lipoate as cofactor.

Functionally, the glycine cleavage system catalyzes the degradation of glycine. The H protein shuttles the methylamine group of glycine from the P protein to the T protein. The polypeptide is Glycine cleavage system H protein 2 (Pseudomonas putida (strain ATCC 47054 / DSM 6125 / CFBP 8728 / NCIMB 11950 / KT2440)).